Here is an 80-residue protein sequence, read N- to C-terminus: Large ribosomal subunit protein bL31B (80 aa).

The protein belongs to the bacterial ribosomal protein bL31 family. Type B subfamily. Part of the 50S ribosomal subunit.

The polypeptide is Large ribosomal subunit protein bL31B (Stenotrophomonas maltophilia (strain K279a)).